The chain runs to 86 residues: Toxin Cn1 (86 aa).

The first 19 residues, 1–19, serve as a signal peptide directing secretion; it reads MNSLLMITACFVLIGTVWA. In terms of domain architecture, LCN-type CS-alpha/beta spans 20-84; it reads KDGYLVDAKG…TWPLPNKTCS (65 aa). 4 disulfide bridges follow: C30/C83, C34/C59, C43/C64, and C47/C66. S84 is subject to Serine amide.

The protein belongs to the long (4 C-C) scorpion toxin superfamily. Sodium channel inhibitor family. Beta subfamily. In terms of tissue distribution, expressed by the venom gland.

Its subcellular location is the secreted. Beta toxins bind voltage-independently at site-4 of sodium channels (Nav) and shift the voltage of activation toward more negative potentials thereby affecting sodium channel activation and promoting spontaneous and repetitive firing. The sequence is that of Toxin Cn1 from Centruroides noxius (Mexican scorpion).